Consider the following 185-residue polypeptide: Large ribosomal subunit protein uL5 (185 aa).

This sequence belongs to the universal ribosomal protein uL5 family. In terms of assembly, part of the 50S ribosomal subunit; part of the 5S rRNA/L5/L18/L25 subcomplex. Contacts the 5S rRNA and the P site tRNA. Forms a bridge to the 30S subunit in the 70S ribosome.

Its function is as follows. This is one of the proteins that bind and probably mediate the attachment of the 5S RNA into the large ribosomal subunit, where it forms part of the central protuberance. In the 70S ribosome it contacts protein S13 of the 30S subunit (bridge B1b), connecting the 2 subunits; this bridge is implicated in subunit movement. Contacts the P site tRNA; the 5S rRNA and some of its associated proteins might help stabilize positioning of ribosome-bound tRNAs. The sequence is that of Large ribosomal subunit protein uL5 from Streptomyces avermitilis (strain ATCC 31267 / DSM 46492 / JCM 5070 / NBRC 14893 / NCIMB 12804 / NRRL 8165 / MA-4680).